Consider the following 470-residue polypeptide: Membrane-bound lytic murein transglycosylase F (470 aa).

The signal sequence occupies residues 1–24; sequence MPSLKTKGAAGKFASLLLVLALSA. The tract at residues 25–262 is non-LT domain; sequence CSRPAPPPET…RALERYFGHV (238 aa). An LT domain region spans residues 263–470; that stretch reads KRLGSSDILG…RGEDGLPPPG (208 aa). Glutamate 309 is an active-site residue.

In the N-terminal section; belongs to the bacterial solute-binding protein 3 family. It in the C-terminal section; belongs to the transglycosylase Slt family.

It is found in the cell outer membrane. The catalysed reaction is Exolytic cleavage of the (1-&gt;4)-beta-glycosidic linkage between N-acetylmuramic acid (MurNAc) and N-acetylglucosamine (GlcNAc) residues in peptidoglycan, from either the reducing or the non-reducing ends of the peptidoglycan chains, with concomitant formation of a 1,6-anhydrobond in the MurNAc residue.. Functionally, murein-degrading enzyme that degrades murein glycan strands and insoluble, high-molecular weight murein sacculi, with the concomitant formation of a 1,6-anhydromuramoyl product. Lytic transglycosylases (LTs) play an integral role in the metabolism of the peptidoglycan (PG) sacculus. Their lytic action creates space within the PG sacculus to allow for its expansion as well as for the insertion of various structures such as secretion systems and flagella. The sequence is that of Membrane-bound lytic murein transglycosylase F from Thiobacillus denitrificans (strain ATCC 25259 / T1).